Reading from the N-terminus, the 288-residue chain is ATP phosphoribosyltransferase (288 aa).

Belongs to the ATP phosphoribosyltransferase family. Long subfamily. The cofactor is Mg(2+).

It is found in the cytoplasm. It carries out the reaction 1-(5-phospho-beta-D-ribosyl)-ATP + diphosphate = 5-phospho-alpha-D-ribose 1-diphosphate + ATP. It participates in amino-acid biosynthesis; L-histidine biosynthesis; L-histidine from 5-phospho-alpha-D-ribose 1-diphosphate: step 1/9. Its activity is regulated as follows. Feedback inhibited by histidine. Its function is as follows. Catalyzes the condensation of ATP and 5-phosphoribose 1-diphosphate to form N'-(5'-phosphoribosyl)-ATP (PR-ATP). Has a crucial role in the pathway because the rate of histidine biosynthesis seems to be controlled primarily by regulation of HisG enzymatic activity. This chain is ATP phosphoribosyltransferase, found in Methanococcus maripaludis (strain C6 / ATCC BAA-1332).